The sequence spans 502 residues: Adenylate cyclase (502 aa).

Residues Met-1–Gln-25 lie on the Cytoplasmic side of the membrane. The chain crosses the membrane as a helical span at residues Ile-26–Ala-46. Residues Lys-47–Ala-203 lie on the Lumenal, thylakoid side of the membrane. A helical membrane pass occupies residues Val-204–Ala-226. Residues Gln-227 to Asn-280 form the HAMP domain. The Cytoplasmic segment spans residues Gln-227–Ala-502. The 132-residue stretch at Thr-320–Glu-451 folds into the Guanylate cyclase domain. Asp-325 and Asp-369 together coordinate Mg(2+).

It belongs to the adenylyl cyclase class-3 family. Mg(2+) serves as cofactor.

The protein localises to the cellular thylakoid membrane. The catalysed reaction is ATP = 3',5'-cyclic AMP + diphosphate. May function as a membrane-localized receptor protein. The polypeptide is Adenylate cyclase (cya) (Anabaena cylindrica).